Consider the following 485-residue polypeptide: Silicon efflux transporter LSI3 (485 aa).

The next 5 helical transmembrane spans lie at 14-34 (VAFG…LPIG), 37-57 (AGAL…ADDA), 59-79 (ASID…GGYL), 106-126 (VCVV…CVVL), and 180-200 (FLLG…LMLL). Over residues 233-242 (ALNNNKKDDG) the composition is skewed to basic and acidic residues. Positions 233–261 (ALNNNKKDDGDAATPASPEDDDGGDAESM) are disordered. 5 consecutive transmembrane segments (helical) span residues 283 to 303 (LFLK…YMLG), 336 to 356 (LLVF…TGLP), 377 to 397 (VLSV…TVLL), 418 to 438 (WLLL…GSAA), and 461 to 481 (HVIF…PLIG).

This sequence belongs to the arsenite-antimonite (ArsB) efflux (TC 2.A.45) family.

The protein localises to the cell membrane. Its function is as follows. Silicon efflux transporter involved in silicon transport in shoots. In the nodes, involved with LSI2 and NIP2-2/LSI6 in silicon intervascular transfer, which is required for the preferential distribution of silicon, such as hyperaccumulation of silicon in the husk. Silicon is beneficial to plant growth and helps plants to overcome abiotic and biotic stresses by preventing lodging (falling over) and increasing resistance to pests and diseases, as well as other stresses. The chain is Silicon efflux transporter LSI3 from Oryza sativa subsp. japonica (Rice).